The sequence spans 115 residues: ATP synthase subunits region ORF 7 (115 aa).

In Fuscovulum blasticum (Rhodobacter blasticus), this protein is ATP synthase subunits region ORF 7.